Consider the following 497-residue polypeptide: Protein nucleotidyltransferase YdiU (497 aa).

Residues Gly-92, Gly-94, Arg-95, Lys-114, Asp-126, Gly-127, Arg-177, and Arg-184 each contribute to the ATP site. Asp-261 serves as the catalytic Proton acceptor. Mg(2+) is bound by residues Asn-262 and Asp-271. Asp-271 contacts ATP.

Belongs to the SELO family. Mg(2+) serves as cofactor. Mn(2+) is required as a cofactor.

The catalysed reaction is L-seryl-[protein] + ATP = 3-O-(5'-adenylyl)-L-seryl-[protein] + diphosphate. It catalyses the reaction L-threonyl-[protein] + ATP = 3-O-(5'-adenylyl)-L-threonyl-[protein] + diphosphate. It carries out the reaction L-tyrosyl-[protein] + ATP = O-(5'-adenylyl)-L-tyrosyl-[protein] + diphosphate. The enzyme catalyses L-histidyl-[protein] + UTP = N(tele)-(5'-uridylyl)-L-histidyl-[protein] + diphosphate. The catalysed reaction is L-seryl-[protein] + UTP = O-(5'-uridylyl)-L-seryl-[protein] + diphosphate. It catalyses the reaction L-tyrosyl-[protein] + UTP = O-(5'-uridylyl)-L-tyrosyl-[protein] + diphosphate. Its function is as follows. Nucleotidyltransferase involved in the post-translational modification of proteins. It can catalyze the addition of adenosine monophosphate (AMP) or uridine monophosphate (UMP) to a protein, resulting in modifications known as AMPylation and UMPylation. The protein is Protein nucleotidyltransferase YdiU of Bordetella petrii (strain ATCC BAA-461 / DSM 12804 / CCUG 43448).